We begin with the raw amino-acid sequence, 184 residues long: RNA 2',3'-cyclic phosphodiesterase (184 aa).

Catalysis depends on His-40, which acts as the Proton donor. Short sequence motifs (HXTX) lie at residues 40–43 and 125–128; these read HITL. His-125 serves as the catalytic Proton acceptor.

Belongs to the 2H phosphoesterase superfamily. ThpR family.

It catalyses the reaction a 3'-end 2',3'-cyclophospho-ribonucleotide-RNA + H2O = a 3'-end 2'-phospho-ribonucleotide-RNA + H(+). Its function is as follows. Hydrolyzes RNA 2',3'-cyclic phosphodiester to an RNA 2'-phosphomonoester. In vitro, ligates 5' and 3' half-tRNA molecules with 2',3'-cyclic phosphate and 5'-hydroxyl termini, respectively, to the product containing the 2'-5' phosphodiester linkage. Ligase activity requires GTP, but GTP hydrolysis is not required for the reaction, which is reversible. Ligase activity is weak compared to the phosphodiesterase activity. The chain is RNA 2',3'-cyclic phosphodiesterase from Pyrococcus furiosus (strain ATCC 43587 / DSM 3638 / JCM 8422 / Vc1).